Reading from the N-terminus, the 311-residue chain is Tryptophan 2,3-dioxygenase (311 aa).

The tract at residues 1–37 (MQPPGGDAPAGCPFSGARAAQPAQAAHEAPHVPGEAD) is disordered. The segment covering 17–27 (ARAAQPAQAAH) has biased composition (low complexity). Substrate contacts are provided by residues 80–84 (FIIQH), tyrosine 142, and arginine 146. A heme-binding site is contributed by histidine 269. Residue threonine 283 participates in substrate binding.

The protein belongs to the tryptophan 2,3-dioxygenase family. In terms of assembly, homotetramer. Requires heme as cofactor.

It carries out the reaction L-tryptophan + O2 = N-formyl-L-kynurenine. Its pathway is amino-acid degradation; L-tryptophan degradation via kynurenine pathway; L-kynurenine from L-tryptophan: step 1/2. Heme-dependent dioxygenase that catalyzes the oxidative cleavage of the L-tryptophan (L-Trp) pyrrole ring and converts L-tryptophan to N-formyl-L-kynurenine. Catalyzes the oxidative cleavage of the indole moiety. The polypeptide is Tryptophan 2,3-dioxygenase (Burkholderia orbicola (strain MC0-3)).